The primary structure comprises 440 residues: UDP-N-acetylglucosamine 1-carboxyvinyltransferase 1 (440 aa).

Phosphoenolpyruvate is bound at residue 22 to 23 (KN). Residue Arg93 coordinates UDP-N-acetyl-alpha-D-glucosamine. Cys117 (proton donor) is an active-site residue. Cys117 carries the 2-(S-cysteinyl)pyruvic acid O-phosphothioketal modification. UDP-N-acetyl-alpha-D-glucosamine is bound by residues 122-126 (RPIDQ), Asp306, and Val328.

The protein belongs to the EPSP synthase family. MurA subfamily.

Its subcellular location is the cytoplasm. The enzyme catalyses phosphoenolpyruvate + UDP-N-acetyl-alpha-D-glucosamine = UDP-N-acetyl-3-O-(1-carboxyvinyl)-alpha-D-glucosamine + phosphate. It participates in cell wall biogenesis; peptidoglycan biosynthesis. In terms of biological role, cell wall formation. Adds enolpyruvyl to UDP-N-acetylglucosamine. This is UDP-N-acetylglucosamine 1-carboxyvinyltransferase 1 from Halalkalibacterium halodurans (strain ATCC BAA-125 / DSM 18197 / FERM 7344 / JCM 9153 / C-125) (Bacillus halodurans).